The following is a 209-amino-acid chain: Imidazole glycerol phosphate synthase subunit HisH (209 aa).

The 205-residue stretch at 1-205 (MIAIIDYGMG…KGVVETWKSS (205 aa)) folds into the Glutamine amidotransferase type-1 domain. C79 (nucleophile) is an active-site residue. Active-site residues include H180 and E182.

As to quaternary structure, heterodimer of HisH and HisF.

Its subcellular location is the cytoplasm. The enzyme catalyses 5-[(5-phospho-1-deoxy-D-ribulos-1-ylimino)methylamino]-1-(5-phospho-beta-D-ribosyl)imidazole-4-carboxamide + L-glutamine = D-erythro-1-(imidazol-4-yl)glycerol 3-phosphate + 5-amino-1-(5-phospho-beta-D-ribosyl)imidazole-4-carboxamide + L-glutamate + H(+). It carries out the reaction L-glutamine + H2O = L-glutamate + NH4(+). Its pathway is amino-acid biosynthesis; L-histidine biosynthesis; L-histidine from 5-phospho-alpha-D-ribose 1-diphosphate: step 5/9. In terms of biological role, IGPS catalyzes the conversion of PRFAR and glutamine to IGP, AICAR and glutamate. The HisH subunit catalyzes the hydrolysis of glutamine to glutamate and ammonia as part of the synthesis of IGP and AICAR. The resulting ammonia molecule is channeled to the active site of HisF. This is Imidazole glycerol phosphate synthase subunit HisH from Bacillus cereus (strain AH187).